A 476-amino-acid polypeptide reads, in one-letter code: Lactate utilization protein B (476 aa).

4Fe-4S ferredoxin-type domains lie at 304-334 (GTEFQPVLQCIRCAACVNVCPVYRHIGGHSY) and 353-382 (YDDYKELPYASSLCAACTEACPVKIPLHEL). Residues Cys-313, Cys-316, Cys-319, Cys-323, Cys-366, Cys-369, and Cys-373 each coordinate [4Fe-4S] cluster. The tract at residues 440–476 (KGPGPLKAWTESREFPAPSKERFRDWFQTRQKGGNPS) is disordered. A compositionally biased stretch (basic and acidic residues) spans 449–466 (TESREFPAPSKERFRDWF). Over residues 467-476 (QTRQKGGNPS) the composition is skewed to polar residues.

It belongs to the LutB/YkgF family.

Its function is as follows. Is involved in L-lactate degradation and allows cells to grow with lactate as the sole carbon source. Has probably a role as an electron transporter during oxidation of L-lactate. The polypeptide is Lactate utilization protein B (Geobacillus kaustophilus (strain HTA426)).